The following is a 954-amino-acid chain: MKLSKIKKVLSGTVSALMIASAAPVVASAADQQTRGNVGGYDYEMWNQNGQGQASMNPGAGSFTCSWSNIENFLARMGKNYDSQKKNYKAFGNIVLTYDVEYTPRGNSYMCVYGWTRNPLMEYYIVEGWGDWRPPGNDGEVKGTVSANGNTYDIRKTMRYNQPSLDGTATFPQYWSVRQTSGSANNQTNYMKGTIDVTKHFDAWSAAGLDMSGTLYEVSLNIEGYRSNGSANVKSVSVTQGGSSDNGGQQQNNDWNQQNNNQQQNNDWNNWGQQNNDWNQWNNQGQQNNDWNNWGQQNNDWNQWNNQGQQQNNDWNNWGQQNNDWNQWNNQGQQQNNDWNNWGQQNNDWNQWNNQGQQQNNDWNNWGQQNNDWNQWNNQNNNQQNAWNGWDNNNNWNQNNQQQNNWDWNNQNNWNNNQQQNNDWNQWNNQNNWNNNQQQNNDWNQWNNQGQQNNDWNQWNNQNNWNQNNNQQNAWNGWDNNNNWNQWDQNNQWNNQQQNNTWDWNNQNNWNNNQQNNDWNQWNNQGQQQNNDWNQWNNQNNNQNNGWDWNNQNNWNQNNNQQNAWNGWDNNNNWNQWGGQNNDWNNQQQNNDWNQWNNQGQQQNNDWNNQNNWNQGQQNNNNSAGSSDSLKGAFSKYFKIGTSVSPHELNSGADFLKKHYNSITPENELKPESILDQGACQQKGNNVNTQISLSRAAQTLKFCEQNGIALRGHTFVWYSQTPDWFFRENFSQNGAYVSKDIMNQRLESMIKNTFAALKSQYPNLDVYSYDVCNELFLNNGGGMRGADNSNWVKIYGDDSFVINAFKYARQYAPAGCKLYLNDYNEYIPAKTNDIYNMAMKLKQLGYIDGIGMQSHLATNYPDANTYETALKKFLSTGLEVQITELDITCTNSAEQADLYEKIFKLAMQNSAQIPAVTIWGTQDTVSWRSSQNPLLFSAGYQPKPAYDRVMALAK.

The or 28, or 29 signal peptide spans 1–27 (MKLSKIKKVLSGTVSALMIASAAPVVA). A GH11 domain is found at 29 to 236 (AADQQTRGNV…SNGSANVKSV (208 aa)). Glutamate 122 functions as the Nucleophile in the catalytic mechanism. Glutamate 223 acts as the Proton donor in catalysis. The segment covering 233–243 (VKSVSVTQGGS) has biased composition (polar residues). The tract at residues 233-628 (VKSVSVTQGG…NNNNSAGSSD (396 aa)) is disordered. A compositionally biased stretch (low complexity) spans 246–622 (NGGQQQNNDW…WNQGQQNNNN (377 aa)). The GH10 domain maps to 624–952 (AGSSDSLKGA…KPAYDRVMAL (329 aa)). Glutamate 774 functions as the Proton donor in the catalytic mechanism. Glutamate 884 functions as the Nucleophile in the catalytic mechanism.

The protein in the N-terminal section; belongs to the glycosyl hydrolase 11 (cellulase G) family. It in the C-terminal section; belongs to the glycosyl hydrolase 10 (cellulase F) family.

It carries out the reaction Endohydrolysis of (1-&gt;4)-beta-D-xylosidic linkages in xylans.. Its pathway is glycan degradation; xylan degradation. In terms of biological role, xylanase domain releases more xylo-oligosaccharides and GH10 domain more xylose. The chain is Bifunctional endo-1,4-beta-xylanase XylA (xynA) from Ruminococcus flavefaciens.